Consider the following 150-residue polypeptide: 3-hydroxyacyl-[acyl-carrier-protein] dehydratase FabZ (150 aa).

His52 is an active-site residue.

It belongs to the thioester dehydratase family. FabZ subfamily.

It is found in the cytoplasm. It carries out the reaction a (3R)-hydroxyacyl-[ACP] = a (2E)-enoyl-[ACP] + H2O. In terms of biological role, involved in unsaturated fatty acids biosynthesis. Catalyzes the dehydration of short chain beta-hydroxyacyl-ACPs and long chain saturated and unsaturated beta-hydroxyacyl-ACPs. This Albidiferax ferrireducens (strain ATCC BAA-621 / DSM 15236 / T118) (Rhodoferax ferrireducens) protein is 3-hydroxyacyl-[acyl-carrier-protein] dehydratase FabZ.